The chain runs to 204 residues: dTTP/UTP pyrophosphatase (204 aa).

D76 (proton acceptor) is an active-site residue.

Belongs to the Maf family. YhdE subfamily. Requires a divalent metal cation as cofactor.

The protein localises to the cytoplasm. It catalyses the reaction dTTP + H2O = dTMP + diphosphate + H(+). It carries out the reaction UTP + H2O = UMP + diphosphate + H(+). Nucleoside triphosphate pyrophosphatase that hydrolyzes dTTP and UTP. May have a dual role in cell division arrest and in preventing the incorporation of modified nucleotides into cellular nucleic acids. This chain is dTTP/UTP pyrophosphatase, found in Salinibacter ruber (strain DSM 13855 / M31).